We begin with the raw amino-acid sequence, 213 residues long: Octanoyltransferase (213 aa).

Positions 27 to 209 (AATPDEVWLC…RLLAAMPEPA (183 aa)) constitute a BPL/LPL catalytic domain. Substrate-binding positions include 66-73 (RGGQVTYH), 140-142 (ALG), and 153-155 (GVA). C171 acts as the Acyl-thioester intermediate in catalysis.

This sequence belongs to the LipB family.

It is found in the cytoplasm. The enzyme catalyses octanoyl-[ACP] + L-lysyl-[protein] = N(6)-octanoyl-L-lysyl-[protein] + holo-[ACP] + H(+). Its pathway is protein modification; protein lipoylation via endogenous pathway; protein N(6)-(lipoyl)lysine from octanoyl-[acyl-carrier-protein]: step 1/2. Its function is as follows. Catalyzes the transfer of endogenously produced octanoic acid from octanoyl-acyl-carrier-protein onto the lipoyl domains of lipoate-dependent enzymes. Lipoyl-ACP can also act as a substrate although octanoyl-ACP is likely to be the physiological substrate. This Bordetella petrii (strain ATCC BAA-461 / DSM 12804 / CCUG 43448) protein is Octanoyltransferase.